A 149-amino-acid chain; its full sequence is Calmodulin (149 aa).

Position 2 is an N-acetylalanine (alanine 2). EF-hand domains follow at residues 8-43 (EQIA…LGQN), 44-79 (PTEA…KMKD), 81-116 (DSEE…LGEK), and 117-149 (LTDE…MTTK). Ca(2+) is bound by residues aspartate 21, aspartate 23, aspartate 25, threonine 27, glutamate 32, aspartate 57, aspartate 59, asparagine 61, threonine 63, glutamate 68, aspartate 94, aspartate 96, asparagine 98, and glutamate 105. An N6,N6,N6-trimethyllysine modification is found at lysine 116. Residues aspartate 130, aspartate 132, aspartate 134, glutamine 136, and glutamate 141 each contribute to the Ca(2+) site.

Belongs to the calmodulin family. As to quaternary structure, interacts (in the presence of Ca(2+)) with pde-1, madf-3, rpl-7A, tax-6, efk-1, npp-1, obr-4, sos-1, akt-1, unc-13, tag-196, ugt-48, nmy-2, F27D4.4, ddx-23, efa-6 and R11H6.4.

Its function is as follows. Calmodulin mediates the control of a large number of enzymes, ion channels and other proteins by Ca(2+). Among the enzymes to be stimulated by the calmodulin-Ca(2+) complex are a number of protein kinases and phosphatases. The polypeptide is Calmodulin (cmd-1) (Caenorhabditis elegans).